Here is a 532-residue protein sequence, read N- to C-terminus: CTP synthase (532 aa).

The segment at 1–267 (MTKYIFVTGG…DDIVLEHLQL (267 aa)) is amidoligase domain. S13 lines the CTP pocket. S13 serves as a coordination point for UTP. 14 to 19 (SIGKGI) is a binding site for ATP. Y54 serves as a coordination point for L-glutamine. D71 contacts ATP. D71 and E141 together coordinate Mg(2+). Residues 148–150 (DIE), 188–193 (KTKPTQ), and K224 each bind CTP. UTP-binding positions include 188–193 (KTKPTQ) and K224. The 241-residue stretch at 292–532 (RIGLVGKYVS…DFVGAALKNK (241 aa)) folds into the Glutamine amidotransferase type-1 domain. G354 contacts L-glutamine. C381 (nucleophile; for glutamine hydrolysis) is an active-site residue. L-glutamine-binding positions include 382–385 (LGMQ), E405, and R462. Catalysis depends on residues H507 and E509.

Belongs to the CTP synthase family. Homotetramer.

The enzyme catalyses UTP + L-glutamine + ATP + H2O = CTP + L-glutamate + ADP + phosphate + 2 H(+). It catalyses the reaction L-glutamine + H2O = L-glutamate + NH4(+). It carries out the reaction UTP + NH4(+) + ATP = CTP + ADP + phosphate + 2 H(+). Its pathway is pyrimidine metabolism; CTP biosynthesis via de novo pathway; CTP from UDP: step 2/2. Its activity is regulated as follows. Allosterically activated by GTP, when glutamine is the substrate; GTP has no effect on the reaction when ammonia is the substrate. The allosteric effector GTP functions by stabilizing the protein conformation that binds the tetrahedral intermediate(s) formed during glutamine hydrolysis. Inhibited by the product CTP, via allosteric rather than competitive inhibition. Catalyzes the ATP-dependent amination of UTP to CTP with either L-glutamine or ammonia as the source of nitrogen. Regulates intracellular CTP levels through interactions with the four ribonucleotide triphosphates. This is CTP synthase from Listeria monocytogenes serovar 1/2a (strain ATCC BAA-679 / EGD-e).